A 1310-amino-acid polypeptide reads, in one-letter code: PAN2-PAN3 deadenylation complex catalytic subunit pan2 (1310 aa).

WD repeat units follow at residues 22–61, 67–105, 106–144, and 145–184; these read YHAG…RFTA, ETDG…SIRH, ESMQ…GEVV, and KELP…IKKQ. The tract at residues 318 to 463 is linker; that stretch reads QFTEIGIPPR…NNDHWSLRPE (146 aa). Positions 463–850 constitute a USP domain; the sequence is EAPPEYRICE…MPVVVMFQVK (388 aa). His525, Cys530, Cys535, Cys538, Cys645, Cys648, Cys700, and Cys703 together coordinate Zn(2+). An Exonuclease domain is found at 897–1070; that stretch reads IAIDTEFIRL…EDAQTALKLY (174 aa). Asp900, Glu902, Asp1009, and Asp1062 together coordinate a divalent metal cation. The interval 1121–1169 is disordered; the sequence is TPPVPAPGTTEGSFEISNSSTATTGGSALSATGGMGSASASSSMPSTPV. A compositionally biased stretch (low complexity) spans 1139 to 1168; that stretch reads SSTATTGGSALSATGGMGSASASSSMPSTP.

The protein belongs to the peptidase C19 family. PAN2 subfamily. Forms a heterotrimer with an asymmetric homodimer of the regulatory subunit par-2/pan3 to form the poly(A)-nuclease (PAN) deadenylation complex. A divalent metal cation is required as a cofactor.

It localises to the cytoplasm. It carries out the reaction Exonucleolytic cleavage of poly(A) to 5'-AMP.. With respect to regulation, positively regulated by the regulatory subunit par-2/pan3. Functionally, catalytic subunit of the poly(A)-nuclease (PAN) deadenylation complex, one of two cytoplasmic mRNA deadenylases involved in mRNA turnover. PAN specifically shortens poly(A) tails of RNA and the activity is stimulated by poly(A)-binding protein pabp-1. PAN deadenylation is followed by rapid degradation of the shortened mRNA tails by the CCR4-NOT complex. Deadenylated mRNAs are then degraded by two alternative mechanisms, namely exosome-mediated 3'-5' exonucleolytic degradation, or deadenylation-dependent mRNA decaping and subsequent 5'-3' exonucleolytic degradation by rgb-30/xrn1. May also be involved in post-transcriptional maturation of mRNA poly(A) tails. This chain is PAN2-PAN3 deadenylation complex catalytic subunit pan2 (par-1), found in Neurospora crassa (strain ATCC 24698 / 74-OR23-1A / CBS 708.71 / DSM 1257 / FGSC 987).